The chain runs to 133 residues: NADPH-dependent 7-cyano-7-deazaguanine reductase (133 aa).

Cysteine 46 functions as the Thioimide intermediate in the catalytic mechanism. The Proton donor role is filled by aspartate 53. Substrate contacts are provided by residues 68-70 (VEL) and 87-88 (HE).

It belongs to the GTP cyclohydrolase I family. QueF type 1 subfamily.

The protein resides in the cytoplasm. It catalyses the reaction 7-aminomethyl-7-carbaguanine + 2 NADP(+) = 7-cyano-7-deazaguanine + 2 NADPH + 3 H(+). The protein operates within tRNA modification; tRNA-queuosine biosynthesis. In terms of biological role, catalyzes the NADPH-dependent reduction of 7-cyano-7-deazaguanine (preQ0) to 7-aminomethyl-7-deazaguanine (preQ1). This is NADPH-dependent 7-cyano-7-deazaguanine reductase from Parasynechococcus marenigrum (strain WH8102).